We begin with the raw amino-acid sequence, 351 residues long: MYEPIAPISWRDGQVEMIDQTLLPGELVIIRPRTVEEMWDAIKKLKVRGAPAIGIAAALGLYLAVKDSGARDKAGFEAELQKAAAYLASSRPTAVNLFWALKRVQQAVAAAATDDVAALKELVLKEALAIRDEDEAMCRAIGEHGASLLADAEAVLTHCNAGTLATARYGTALAPIYTLAARGKVLKVFADETRPLLQGARLTTWELHQAGIPVTLITDNMAATVMARGWVQAVIVGADRITANGDVANKIGTYGVAILAREHGIPFYVAAPASTFDLSLSGGEQIPIEERDPAEVSHFGLRPTAPEGIGIFNPAFDVTPYRYVTAIITEKGVIRPPYKQNIAKVLAGESR.

Residues 48-50 (RGA), R91, and Q198 contribute to the substrate site. D239 functions as the Proton donor in the catalytic mechanism. Position 249-250 (249-250 (NK)) interacts with substrate.

The protein belongs to the EIF-2B alpha/beta/delta subunits family. DrdI subfamily.

It catalyses the reaction 5-deoxy-alpha-D-ribose 1-phosphate = 5-deoxy-D-ribulose 1-phosphate. The protein operates within carbohydrate degradation. Catalyzes the isomerization of 5-deoxy-alpha-D-ribose 1-phosphate to 5-deoxy-D-ribulose 1-phosphate, as part of a 5-deoxyribose salvage pathway that recycles this toxic radical SAM enzyme by-product to mainstream metabolites. The sequence is that of 5-deoxyribose 1-phosphate isomerase from Moorella thermoacetica (strain ATCC 39073 / JCM 9320).